Here is a 245-residue protein sequence, read N- to C-terminus: 1-(5-phosphoribosyl)-5-[(5-phosphoribosylamino)methylideneamino] imidazole-4-carboxamide isomerase (245 aa).

Catalysis depends on D8, which acts as the Proton acceptor. D131 serves as the catalytic Proton donor.

It belongs to the HisA/HisF family.

It is found in the cytoplasm. The enzyme catalyses 1-(5-phospho-beta-D-ribosyl)-5-[(5-phospho-beta-D-ribosylamino)methylideneamino]imidazole-4-carboxamide = 5-[(5-phospho-1-deoxy-D-ribulos-1-ylimino)methylamino]-1-(5-phospho-beta-D-ribosyl)imidazole-4-carboxamide. Its pathway is amino-acid biosynthesis; L-histidine biosynthesis; L-histidine from 5-phospho-alpha-D-ribose 1-diphosphate: step 4/9. This chain is 1-(5-phosphoribosyl)-5-[(5-phosphoribosylamino)methylideneamino] imidazole-4-carboxamide isomerase, found in Neisseria gonorrhoeae (strain ATCC 700825 / FA 1090).